A 151-amino-acid chain; its full sequence is UPF0178 protein CPS_3584 (151 aa).

The protein belongs to the UPF0178 family.

This Colwellia psychrerythraea (strain 34H / ATCC BAA-681) (Vibrio psychroerythus) protein is UPF0178 protein CPS_3584.